A 210-amino-acid polypeptide reads, in one-letter code: MKGLVGKKLGMTRIFTKDGISIPVTVIEIKANRVTQIKNLDSDGYLALQITTGTKKASRVNKPKAGHFAKANVEAGRGLWEFRVSEQDATVFLGHTFEVSMFKPGDIVDVTGKSKGKGFSGTVKRWNFRTQDASHGNSLSHRVPGSIGQNQTPGKVFKGKKMSGQLGNERVTIQNLEVVRVDVVREILLIKGGVPGAVGKDVIVKLAVKA.

The interval 133 to 156 (ASHGNSLSHRVPGSIGQNQTPGKV) is disordered. Q151 is modified (N5-methylglutamine).

This sequence belongs to the universal ribosomal protein uL3 family. In terms of assembly, part of the 50S ribosomal subunit. Forms a cluster with proteins L14 and L19. In terms of processing, methylated by PrmB.

Its function is as follows. One of the primary rRNA binding proteins, it binds directly near the 3'-end of the 23S rRNA, where it nucleates assembly of the 50S subunit. The polypeptide is Large ribosomal subunit protein uL3 (Hamiltonella defensa subsp. Acyrthosiphon pisum (strain 5AT)).